A 356-amino-acid chain; its full sequence is tRNA N6-adenosine threonylcarbamoyltransferase (356 aa).

2 residues coordinate Fe cation: histidine 115 and histidine 119. Substrate contacts are provided by residues 138–142 (LVSGG), aspartate 171, glycine 184, and asparagine 283. Fe cation is bound at residue aspartate 311.

This sequence belongs to the KAE1 / TsaD family. Fe(2+) is required as a cofactor.

The protein resides in the cytoplasm. It catalyses the reaction L-threonylcarbamoyladenylate + adenosine(37) in tRNA = N(6)-L-threonylcarbamoyladenosine(37) in tRNA + AMP + H(+). Functionally, required for the formation of a threonylcarbamoyl group on adenosine at position 37 (t(6)A37) in tRNAs that read codons beginning with adenine. Is involved in the transfer of the threonylcarbamoyl moiety of threonylcarbamoyl-AMP (TC-AMP) to the N6 group of A37, together with TsaE and TsaB. TsaD likely plays a direct catalytic role in this reaction. This Prochlorococcus marinus (strain MIT 9313) protein is tRNA N6-adenosine threonylcarbamoyltransferase.